The sequence spans 530 residues: Phosphoenolpyruvate carboxykinase (ATP) (530 aa).

Substrate is bound by residues Arg57, Tyr193, and Lys199. ATP-binding positions include Lys199, His218, and 234–242 (GLSGTGKTT). The Mn(2+) site is built by Lys199 and His218. Asp255 lines the Mn(2+) pocket. Glu283, Arg320, and Thr445 together coordinate ATP. Position 320 (Arg320) interacts with substrate.

It belongs to the phosphoenolpyruvate carboxykinase (ATP) family. The cofactor is Mn(2+).

The protein localises to the cytoplasm. It carries out the reaction oxaloacetate + ATP = phosphoenolpyruvate + ADP + CO2. Its pathway is carbohydrate biosynthesis; gluconeogenesis. Functionally, involved in the gluconeogenesis. Catalyzes the conversion of oxaloacetate (OAA) to phosphoenolpyruvate (PEP) through direct phosphoryl transfer between the nucleoside triphosphate and OAA. In Leptospira biflexa serovar Patoc (strain Patoc 1 / Ames), this protein is Phosphoenolpyruvate carboxykinase (ATP).